The sequence spans 95 residues: MAITEDEARKVAHLARIAVKDADLPALAQELNGILHFMEQLNEVDVEGVQPMTGVEPMRLKRRQDIVTDGEMQDLILKNAPDAREGFFAVPKVVE.

The protein belongs to the GatC family. Heterotrimer of A, B and C subunits.

The catalysed reaction is L-glutamyl-tRNA(Gln) + L-glutamine + ATP + H2O = L-glutaminyl-tRNA(Gln) + L-glutamate + ADP + phosphate + H(+). It catalyses the reaction L-aspartyl-tRNA(Asn) + L-glutamine + ATP + H2O = L-asparaginyl-tRNA(Asn) + L-glutamate + ADP + phosphate + 2 H(+). In terms of biological role, allows the formation of correctly charged Asn-tRNA(Asn) or Gln-tRNA(Gln) through the transamidation of misacylated Asp-tRNA(Asn) or Glu-tRNA(Gln) in organisms which lack either or both of asparaginyl-tRNA or glutaminyl-tRNA synthetases. The reaction takes place in the presence of glutamine and ATP through an activated phospho-Asp-tRNA(Asn) or phospho-Glu-tRNA(Gln). This Paracoccus denitrificans (strain Pd 1222) protein is Aspartyl/glutamyl-tRNA(Asn/Gln) amidotransferase subunit C.